Consider the following 207-residue polypeptide: Small ribosomal subunit protein uS4 (207 aa).

The segment at 35-54 is disordered; that stretch reads RPKPPGPQLGRPRRLSDRGQ. Residues 97-163 enclose the S4 RNA-binding domain; it reads RRLDNVLFRL…AYFKTLAENI (67 aa).

It belongs to the universal ribosomal protein uS4 family. In terms of assembly, part of the 30S ribosomal subunit. Contacts protein S5. The interaction surface between S4 and S5 is involved in control of translational fidelity.

Its function is as follows. One of the primary rRNA binding proteins, it binds directly to 16S rRNA where it nucleates assembly of the body of the 30S subunit. Functionally, with S5 and S12 plays an important role in translational accuracy. The polypeptide is Small ribosomal subunit protein uS4 (Dehalococcoides mccartyi (strain CBDB1)).